Consider the following 318-residue polypeptide: Endochitinase 3 (318 aa).

An N-terminal signal peptide occupies residues 1 to 18 (EFTIFSLLFSLLLLNASA). The Chitin-binding type-1 domain maps to 19–60 (EQCGSQAGGALCAPGLCCSKFGWCGNTNDYCGPGNCQSQCPG). 7 disulfide bridges follow: Cys21-Cys36, Cys30-Cys42, Cys35-Cys49, Cys54-Cys58, Cys89-Cys152, Cys164-Cys172, and Cys271-Cys303. Catalysis depends on Glu134, which acts as the Proton donor. Positions 312–318 (GLLVDTV) are cleaved as a propeptide — removed in mature form, vacuolar targeting.

Belongs to the glycosyl hydrolase 19 family. Chitinase class I subfamily.

The protein localises to the vacuole. The enzyme catalyses Random endo-hydrolysis of N-acetyl-beta-D-glucosaminide (1-&gt;4)-beta-linkages in chitin and chitodextrins.. Its function is as follows. Defense against chitin-containing fungal pathogens. This Solanum tuberosum (Potato) protein is Endochitinase 3 (CHTB3).